The chain runs to 637 residues: Biosynthetic arginine decarboxylase (637 aa).

K101 bears the N6-(pyridoxal phosphate)lysine mark. Position 286–296 (286–296 (FDVGGGLAVDY)) interacts with substrate.

It belongs to the Orn/Lys/Arg decarboxylase class-II family. SpeA subfamily. Requires Mg(2+) as cofactor. Pyridoxal 5'-phosphate is required as a cofactor.

It carries out the reaction L-arginine + H(+) = agmatine + CO2. The protein operates within amine and polyamine biosynthesis; agmatine biosynthesis; agmatine from L-arginine: step 1/1. Its function is as follows. Catalyzes the biosynthesis of agmatine from arginine. This is Biosynthetic arginine decarboxylase from Shewanella baltica (strain OS195).